The chain runs to 352 residues: Protein NDRG4 (352 aa).

Phosphoserine occurs at positions 298, 317, and 323. The segment covering R314–S323 has biased composition (low complexity). The disordered stretch occupies residues R314–C352. Over residues Q330 to C352 the composition is skewed to polar residues.

Belongs to the NDRG family. Post-translationally, phosphorylated in an aortic smooth muscle cell line, following PDGF treatment. Expressed predominantly in brain and heart (at protein level). In the brain, detected in astrocytes. Isoform 1 and isoform 2 are only expressed in brain. Isoform 3 is expressed in both heart and brain. Up-regulated in glioblastoma multiforme cells.

Its subcellular location is the cytoplasm. It is found in the cytosol. Contributes to the maintenance of intracerebral BDNF levels within the normal range, which is necessary for the preservation of spatial learning and the resistance to neuronal cell death caused by ischemic stress. May enhance growth factor-induced ERK1 and ERK2 phosphorylation, including that induced by PDGF and FGF. May attenuate NGF-promoted ELK1 phosphorylation in a microtubule-dependent manner. The chain is Protein NDRG4 (NDRG4) from Homo sapiens (Human).